The sequence spans 561 residues: Potassium-transporting ATPase potassium-binding subunit (561 aa).

11 consecutive transmembrane segments (helical) span residues 5–25, 60–80, 86–106, 131–151, 177–197, 247–267, 281–301, 376–396, 415–435, 489–509, and 531–551; these read LAAG…YVPL, CGYA…LYVL, VLPL…NTAV, GLAV…VALI, ILLP…VIQS, PTPL…VALT, LTVL…TTAA, GLYG…LLVG, ALAV…TVVL, LGLC…ALAG, and FAGL…FPVL.

It belongs to the KdpA family. In terms of assembly, the system is composed of three essential subunits: KdpA, KdpB and KdpC.

The protein resides in the cell membrane. Its function is as follows. Part of the high-affinity ATP-driven potassium transport (or Kdp) system, which catalyzes the hydrolysis of ATP coupled with the electrogenic transport of potassium into the cytoplasm. This subunit binds the extracellular potassium ions and delivers the ions to the membrane domain of KdpB through an intramembrane tunnel. This is Potassium-transporting ATPase potassium-binding subunit from Nocardia farcinica (strain IFM 10152).